An 84-amino-acid polypeptide reads, in one-letter code: Mu-Sparatoxin-Hp1 (84 aa).

The first 20 residues, 1–20 (MKIAIVMTLLLVAFSTASFA), serve as a signal peptide directing secretion. Positions 21–35 (IEPIERAALDLVMAR) are excised as a propeptide. 3 disulfides stabilise this stretch: Cys54/Cys68, Cys61/Cys73, and Cys67/Cys78. A Leucine amide modification is found at Leu82.

As to expression, expressed by the venom gland.

The protein resides in the secreted. Weakly nhibits voltage-gated sodium channels Nav1.7/SCN9A. High concentration of the toxin (3 uM) inhibits Nav1.7/SCN9A currents by 79%. The polypeptide is Mu-Sparatoxin-Hp1 (Heteropoda pingtungensis (Pingtung huntsman spider)).